The primary structure comprises 420 residues: Probable protein phosphatase 2C 73 (420 aa).

Residues 33–336 (GVSMHTKQGW…DDCAVVCLFL (304 aa)) form the PPM-type phosphatase domain. 2 residues coordinate Mn(2+): aspartate 69 and glycine 70. Residues 96–105 (LKTEQDPSSN) are compositionally biased toward polar residues. The tract at residues 96–119 (LKTEQDPSSNTDKETLEKSDCTSL) is disordered. The span at 106-115 (TDKETLEKSD) shows a compositional bias: basic and acidic residues. Residues aspartate 281 and aspartate 327 each contribute to the Mn(2+) site.

It belongs to the PP2C family. It depends on Mg(2+) as a cofactor. Mn(2+) serves as cofactor.

The catalysed reaction is O-phospho-L-seryl-[protein] + H2O = L-seryl-[protein] + phosphate. It catalyses the reaction O-phospho-L-threonyl-[protein] + H2O = L-threonyl-[protein] + phosphate. This is Probable protein phosphatase 2C 73 from Oryza sativa subsp. japonica (Rice).